We begin with the raw amino-acid sequence, 317 residues long: Transaldolase (317 aa).

The active-site Schiff-base intermediate with substrate is Lys132.

The protein belongs to the transaldolase family. Type 1 subfamily. As to quaternary structure, homodimer.

The protein resides in the cytoplasm. It catalyses the reaction D-sedoheptulose 7-phosphate + D-glyceraldehyde 3-phosphate = D-erythrose 4-phosphate + beta-D-fructose 6-phosphate. Its pathway is carbohydrate degradation; pentose phosphate pathway; D-glyceraldehyde 3-phosphate and beta-D-fructose 6-phosphate from D-ribose 5-phosphate and D-xylulose 5-phosphate (non-oxidative stage): step 2/3. In terms of biological role, transaldolase is important for the balance of metabolites in the pentose-phosphate pathway. In Mannheimia succiniciproducens (strain KCTC 0769BP / MBEL55E), this protein is Transaldolase.